Consider the following 311-residue polypeptide: Heme A synthase (311 aa).

Over methionine 1–lysine 6 the chain is Cytoplasmic. Residues tryptophan 7–threonine 27 traverse the membrane as a helical segment. The Extracellular portion of the chain corresponds to lysine 28–arginine 62. Cysteine 35 and cysteine 42 form a disulfide bridge. Residue glutamate 58 is part of the active site. Histidine 61 is a heme o binding site. Residues leucine 63–tyrosine 83 form a helical membrane-spanning segment. The Cytoplasmic segment spans residues lysine 84–threonine 91. A helical transmembrane segment spans residues leucine 92–valine 112. Residues tryptophan 113 to alanine 121 are Extracellular-facing. A helical membrane pass occupies residues isoleucine 122 to phenylalanine 142. Histidine 123 lines the heme o pocket. Residues glutamate 143–methionine 159 lie on the Cytoplasmic side of the membrane. A helical transmembrane segment spans residues lysine 160–valine 180. Over arginine 181 to methionine 211 the chain is Extracellular. Residues cysteine 189 and cysteine 195 are joined by a disulfide bond. The helical transmembrane segment at glycine 212–isoleucine 232 threads the bilayer. A heme b-binding site is contributed by histidine 213. Residues arginine 233–tryptophan 243 are Cytoplasmic-facing. Residues glycine 244–phenylalanine 264 traverse the membrane as a helical segment. Topologically, residues threonine 265 to methionine 271 are extracellular. A helical membrane pass occupies residues alanine 272–leucine 292. Residue histidine 275 coordinates heme b. Residues glycine 293–lysine 311 are Cytoplasmic-facing.

Belongs to the COX15/CtaA family. Type 1 subfamily. As to quaternary structure, interacts with CtaB. Requires heme b as cofactor.

The protein resides in the cell membrane. The catalysed reaction is Fe(II)-heme o + 2 A + H2O = Fe(II)-heme a + 2 AH2. The protein operates within porphyrin-containing compound metabolism; heme A biosynthesis; heme A from heme O: step 1/1. Its function is as follows. Catalyzes the conversion of heme O to heme A by two successive hydroxylations of the methyl group at C8. The first hydroxylation forms heme I, the second hydroxylation results in an unstable dihydroxymethyl group, which spontaneously dehydrates, resulting in the formyl group of heme A. The chain is Heme A synthase from Bacillus cereus (strain G9842).